The primary structure comprises 500 residues: L-arabinose isomerase (500 aa).

Residues E306, E333, H349, and H448 each contribute to the Mn(2+) site.

The protein belongs to the arabinose isomerase family. Mn(2+) serves as cofactor.

It carries out the reaction beta-L-arabinopyranose = L-ribulose. It functions in the pathway carbohydrate degradation; L-arabinose degradation via L-ribulose; D-xylulose 5-phosphate from L-arabinose (bacterial route): step 1/3. In terms of biological role, catalyzes the conversion of L-arabinose to L-ribulose. The chain is L-arabinose isomerase from Shewanella sp. (strain MR-4).